We begin with the raw amino-acid sequence, 885 residues long: Cytosolic carboxypeptidase-like protein 5 (885 aa).

One can recognise a Peptidase M14 domain in the interval 150–576; sequence YPFSYAECQD…AVAVAALDMA (427 aa). Zn(2+) is bound by residues His-247 and Glu-250. Disordered regions lie at residues 341-364 and 392-428; these read SGSALKTSNQSNTSPPVATPTERE and ESWEKSGVQREAEHSDENESAQSRGETNSAPSEQVPP. Residues 344 to 356 are compositionally biased toward polar residues; that stretch reads ALKTSNQSNTSPP. Basic and acidic residues predominate over residues 393 to 408; that stretch reads SWEKSGVQREAEHSDE. Positions 411–428 are enriched in polar residues; it reads SAQSRGETNSAPSEQVPP. Position 440 (His-440) interacts with Zn(2+). Glu-522 serves as the catalytic Proton donor/acceptor. Positions 606 to 668 are enriched in polar residues; it reads STGLTSNNRR…KSSPSFTFGT (63 aa). Disordered stretches follow at residues 606–788 and 866–885; these read STGL…RTAL and ALLKNSSRQTDQHIHRSLPT. The span at 682–691 shows a compositional bias: basic and acidic residues; sequence RECKAQEKRR. Positions 712–749 are enriched in low complexity; sequence LSAPVRAPLSPSSSSSSSSSSPSSSSSAPGPGSISLAG.

This sequence belongs to the peptidase M14 family. Zn(2+) serves as cofactor.

It is found in the cytoplasm. The protein localises to the cytosol. The protein resides in the nucleus. It localises to the cytoskeleton. Its subcellular location is the spindle. It is found in the midbody. It carries out the reaction gamma-L-glutamyl-L-glutamyl-[protein] + H2O = L-glutamyl-[protein] + L-glutamate. It catalyses the reaction (L-glutamyl)(n+1)-gamma-L-glutamyl-L-glutamyl-[protein] + H2O = (L-glutamyl)(n)-gamma-L-glutamyl-L-glutamyl-[protein] + L-glutamate. The catalysed reaction is C-terminal L-alpha-aminoacyl-L-glutamyl-[tubulin] + H2O = C-terminal L-alpha-aminoacyl-[tubulin] + L-glutamate. The enzyme catalyses C-terminal L-alpha-aminoacyl-L-glutamyl-L-glutamyl-[tubulin] + H2O = C-terminal L-alpha-aminoacyl-L-glutamyl-[tubulin] + L-glutamate. In terms of biological role, metallocarboxypeptidase that mediates deglutamylation of tubulin and non-tubulin target proteins. Catalyzes the removal of polyglutamate side chains present on the gamma-carboxyl group of glutamate residues within the C-terminal tail of alpha- and beta-tubulin. Cleaves alpha- and gamma-linked polyglutamate tubulin side-chain, as well as the branching point glutamate. Also catalyzes the removal of alpha-linked glutamate residues from the carboxy-terminus of alpha-tubulin. The sequence is that of Cytosolic carboxypeptidase-like protein 5 (agbl5) from Danio rerio (Zebrafish).